Here is a 286-residue protein sequence, read N- to C-terminus: Protein HEAT-STRESS-ASSOCIATED 32 (286 aa).

This sequence belongs to the phosphosulfolactate synthase family.

In terms of biological role, transactivator required, together with HSP101, for long-term acquired thermotolerance (LAT) maintenance, probably by regulating heat-inducible genes expression, thus being a cellular component of thermomemory. This Arabidopsis thaliana (Mouse-ear cress) protein is Protein HEAT-STRESS-ASSOCIATED 32.